The primary structure comprises 43 residues: uncharacterized protein (43 aa).

Composition is skewed to polar residues over residues 1 to 19 (MSQK…SGAS) and 33 to 43 (PENSISKTFSK). The segment at 1–43 (MSQKLSFFQQNTRNGSGASRTLVIKPPTIQPKPENSISKTFSK) is disordered.

This is an uncharacterized protein from Dictyostelium discoideum (Social amoeba).